The following is a 117-amino-acid chain: Thioredoxin (117 aa).

A Thioredoxin domain is found at 2 to 116 (AISLTEEDFV…FENIIKDFFG (115 aa)). Cys-40 and Cys-43 are oxidised to a cystine.

This sequence belongs to the thioredoxin family.

Functionally, participates in various redox reactions through the reversible oxidation of its active center dithiol to a disulfide and catalyzes dithiol-disulfide exchange reactions. In Borreliella burgdorferi (strain ATCC 35210 / DSM 4680 / CIP 102532 / B31) (Borrelia burgdorferi), this protein is Thioredoxin (trxA).